The chain runs to 418 residues: Equilibrative nucleotide transporter 6 (418 aa).

Helical transmembrane passes span 19-39, 56-76, 86-106, 112-132, 142-162, 186-206, 264-284, 291-311, 326-346, 353-373, and 392-412; these read AMIVYCILGFGSLISWNSMLT, VLTLVYQPFAFGAIVILAYHE, LIGYILYTISTFLLIVLDLAT, FGPYTGLCAVVAAFGLADATV, LMCPELVQSYMGGMAVAGALT, MFLAISTCIELLSVMLYAYVL, HAVNLFLIYVCTLSIFPGFLY, GLGAWYALVLVAMYNCWDLVG, KLITIAVLSRYLLIPAFYFTA, WMIMLVSVLGLTNGHLTVCIM, and LVIFLLGGIFAGVALDWLWLI.

Belongs to the SLC29A/ENT transporter (TC 2.A.57) family. Expressed in leaves and siliques.

Its subcellular location is the cell membrane. Functionally, nucleoside transporter that can mediate uptake of adenosine, uridine, guanosine or cytidine when expressed in a heterologous system (yeast). The polypeptide is Equilibrative nucleotide transporter 6 (ENT6) (Arabidopsis thaliana (Mouse-ear cress)).